A 757-amino-acid polypeptide reads, in one-letter code: 5-methyltetrahydropteroyltriglutamate--homocysteine methyltransferase (757 aa).

5-methyltetrahydropteroyltri-L-glutamate is bound by residues 16-19 (RELK) and Lys112. Residues 433 to 435 (IGS) and Glu486 each bind L-homocysteine. Residues 433–435 (IGS) and Glu486 each bind L-methionine. 5-methyltetrahydropteroyltri-L-glutamate-binding positions include 517–518 (RC) and Trp563. Asp601 lines the L-homocysteine pocket. Asp601 contacts L-methionine. A 5-methyltetrahydropteroyltri-L-glutamate-binding site is contributed by Glu607. Zn(2+) is bound by residues His643, Cys645, and Glu667. His696 serves as the catalytic Proton donor. A Zn(2+)-binding site is contributed by Cys728.

The protein belongs to the vitamin-B12 independent methionine synthase family. Zn(2+) is required as a cofactor.

It catalyses the reaction 5-methyltetrahydropteroyltri-L-glutamate + L-homocysteine = tetrahydropteroyltri-L-glutamate + L-methionine. Its pathway is amino-acid biosynthesis; L-methionine biosynthesis via de novo pathway; L-methionine from L-homocysteine (MetE route): step 1/1. Functionally, catalyzes the transfer of a methyl group from 5-methyltetrahydrofolate to homocysteine resulting in methionine formation. This is 5-methyltetrahydropteroyltriglutamate--homocysteine methyltransferase from Pasteurella multocida (strain Pm70).